A 246-amino-acid chain; its full sequence is Deoxycytidylate 5-hydroxymethyltransferase (246 aa).

C148 is a catalytic residue.

It belongs to the thymidylate synthase family.

The enzyme catalyses dCMP + (6R)-5,10-methylene-5,6,7,8-tetrahydrofolate + H2O = 5-hydroxymethyl-dCMP + (6S)-5,6,7,8-tetrahydrofolate. The chain is Deoxycytidylate 5-hydroxymethyltransferase (42) from Enterobacteria phage T6 (Bacteriophage T6).